Consider the following 135-residue polypeptide: Small ribosomal subunit protein bS6 (135 aa).

The segment at 104-135 is disordered; that stretch reads FSRLDRNGHIGHDEKHPRSPSRQREDVIEGVE.

It belongs to the bacterial ribosomal protein bS6 family.

Its function is as follows. Binds together with bS18 to 16S ribosomal RNA. The polypeptide is Small ribosomal subunit protein bS6 (Bartonella henselae (strain ATCC 49882 / DSM 28221 / CCUG 30454 / Houston 1) (Rochalimaea henselae)).